Reading from the N-terminus, the 184-residue chain is ADP-ribosylation factor-like protein 2 (184 aa).

A lipid anchor (N-myristoyl glycine) is attached at Gly-2. Gly-23 to Thr-30 is a binding site for GTP. A Phosphoserine modification is found at Ser-45. Residues Asp-66–Gln-70 and Gly-68 contribute to the GTP site. Residue Lys-71 forms a Glycyl lysine isopeptide (Lys-Gly) (interchain with G-Cter in ubiquitin) linkage. Asn-125 to Asp-128 provides a ligand contact to GTP.

Belongs to the small GTPase superfamily. Arf family. In terms of assembly, interacts with ELMOD2. Interacts with ARL2BP; the GTP-bound form interacts with ARL2BP. The GDP-bound form interacts preferentially with TBCD. Interacts with UNC119. Found in a complex with ARL2, ARL2BP and SLC25A4. The GTP-bound form interacts with PDE6D. Found in a complex with ARL2, ARL2BP and SLC25A6. Found in a complex with at least ARL2, PPP2CB, PPP2R1A, PPP2R2A, PPP2R5E and TBCD. In terms of processing, not N-myristoylated. As to expression, expressed in liver and retina (at protein level).

The protein resides in the nucleus. It is found in the mitochondrion intermembrane space. It localises to the cytoplasm. Its subcellular location is the cytoskeleton. The protein localises to the microtubule organizing center. The protein resides in the centrosome. It is found in the mitochondrion. Functionally, small GTP-binding protein which cycles between an inactive GDP-bound and an active GTP-bound form, and the rate of cycling is regulated by guanine nucleotide exchange factors (GEF) and GTPase-activating proteins (GAP). GTP-binding protein that does not act as an allosteric activator of the cholera toxin catalytic subunit. Regulates formation of new microtubules and centrosome integrity. Prevents the TBCD-induced microtubule destruction. Participates in association with TBCD, in the disassembly of the apical junction complexes. Antagonizes the effect of TBCD on epithelial cell detachment and tight and adherens junctions disassembly. Together with ARL2, plays a role in the nuclear translocation, retention and transcriptional activity of STAT3. Component of a regulated secretory pathway involved in Ca(2+)-dependent release of acetylcholine. Required for normal progress through the cell cycle. This Bos taurus (Bovine) protein is ADP-ribosylation factor-like protein 2 (ARL2).